Consider the following 155-residue polypeptide: 3-hydroxyacyl-[acyl-carrier-protein] dehydratase FabZ (155 aa).

The active site involves H54.

It belongs to the thioester dehydratase family. FabZ subfamily.

The protein resides in the cytoplasm. It catalyses the reaction a (3R)-hydroxyacyl-[ACP] = a (2E)-enoyl-[ACP] + H2O. Its function is as follows. Involved in unsaturated fatty acids biosynthesis. Catalyzes the dehydration of short chain beta-hydroxyacyl-ACPs and long chain saturated and unsaturated beta-hydroxyacyl-ACPs. This is 3-hydroxyacyl-[acyl-carrier-protein] dehydratase FabZ from Burkholderia ambifaria (strain MC40-6).